Reading from the N-terminus, the 34-residue chain is Toxin Ptu1 (34 aa).

Intrachain disulfides connect Cys5-Cys20, Cys12-Cys26, and Cys19-Cys33.

The protein localises to the secreted. Its function is as follows. Binds reversibly and blocks N-type voltage-gated calcium channels (Cav). This is Toxin Ptu1 from Peirates turpis (Assassin bug).